Consider the following 290-residue polypeptide: 4-hydroxybenzoate octaprenyltransferase (290 aa).

The next 8 membrane-spanning stretches (helical) occupy residues 23 to 43, 46 to 66, 99 to 119, 141 to 161, 163 to 183, 213 to 233, 234 to 254, and 268 to 288; these read IGALLLLWPTLWALWVATPGV, LWILAVFVAGVWLMRAAGCVV, LFVVLVLISFLLVLTLNTMTI, LPQVVLGAAFGWSIPMAFAAV, ESVPLSCWLMFLANILWAVAY, LIIGIFQIGVLALMAIIGELN, GLGWGYYWSILVAGALFVYQQ, and AFMNNNYVGLVLFLGLAMSYW.

The protein belongs to the UbiA prenyltransferase family. Mg(2+) serves as cofactor.

The protein localises to the cell inner membrane. The enzyme catalyses all-trans-octaprenyl diphosphate + 4-hydroxybenzoate = 4-hydroxy-3-(all-trans-octaprenyl)benzoate + diphosphate. It functions in the pathway cofactor biosynthesis; ubiquinone biosynthesis. Functionally, catalyzes the prenylation of para-hydroxybenzoate (PHB) with an all-trans polyprenyl group. Mediates the second step in the final reaction sequence of ubiquinone-8 (UQ-8) biosynthesis, which is the condensation of the polyisoprenoid side chain with PHB, generating the first membrane-bound Q intermediate 3-octaprenyl-4-hydroxybenzoate. The polypeptide is 4-hydroxybenzoate octaprenyltransferase (Escherichia coli (strain UTI89 / UPEC)).